A 467-amino-acid polypeptide reads, in one-letter code: 6-phosphogluconate dehydrogenase, decarboxylating (467 aa).

NADP(+) is bound by residues 9–14 (GLGVMG), 32–34 (NYT), 73–75 (VTA), and Asn101. Substrate-binding positions include Asn101 and 127–129 (SGG). Lys181 (proton acceptor) is an active-site residue. Residue 184–185 (HN) coordinates substrate. The active-site Proton donor is Glu188. 4 residues coordinate substrate: Tyr189, Lys259, Arg286, and His451.

Belongs to the 6-phosphogluconate dehydrogenase family. In terms of assembly, homodimer.

It catalyses the reaction 6-phospho-D-gluconate + NADP(+) = D-ribulose 5-phosphate + CO2 + NADPH. It functions in the pathway carbohydrate degradation; pentose phosphate pathway; D-ribulose 5-phosphate from D-glucose 6-phosphate (oxidative stage): step 3/3. In terms of biological role, catalyzes the oxidative decarboxylation of 6-phosphogluconate to ribulose 5-phosphate and CO(2), with concomitant reduction of NADP to NADPH. This is 6-phosphogluconate dehydrogenase, decarboxylating (gntZ) from Bacillus licheniformis.